The sequence spans 291 residues: Ribosomal protein L11 methyltransferase (291 aa).

4 residues coordinate S-adenosyl-L-methionine: threonine 136, glycine 159, aspartate 181, and asparagine 228.

This sequence belongs to the methyltransferase superfamily. PrmA family.

It localises to the cytoplasm. The enzyme catalyses L-lysyl-[protein] + 3 S-adenosyl-L-methionine = N(6),N(6),N(6)-trimethyl-L-lysyl-[protein] + 3 S-adenosyl-L-homocysteine + 3 H(+). In terms of biological role, methylates ribosomal protein L11. The polypeptide is Ribosomal protein L11 methyltransferase (Sinorhizobium fredii (strain NBRC 101917 / NGR234)).